A 317-amino-acid polypeptide reads, in one-letter code: Electron transfer flavoprotein subunit alpha (317 aa).

Belongs to the ETF alpha-subunit/FixB family. As to quaternary structure, heterodimer of an alpha and a beta subunit. FAD serves as cofactor.

Its subcellular location is the cytoplasm. It participates in lipid metabolism; butanoate metabolism. Functionally, part of an electron transfer flavoprotein involved in syntrophic growth of S.wolfei with butyrate. Probably receives electrons from butyryl-CoA dehydrogenases, and transfers them to the membrane-bound quinone oxidoreductase Swol_0698. The sequence is that of Electron transfer flavoprotein subunit alpha from Syntrophomonas wolfei subsp. wolfei (strain DSM 2245B / Goettingen).